The sequence spans 374 residues: Inner membrane transport permease YhhJ (374 aa).

Residues 1–22 (MRHLRNIFNLGIKELRSLLGDK) are Cytoplasmic-facing. A helical transmembrane segment spans residues 23-43 (AMLTLIVFSFTVSVYSSATVT). Residues 44–172 (PGSLNLAPIA…TRMRFNPNLD (129 aa)) lie on the Periplasmic side of the membrane. The ABC transmembrane type-2 domain occupies 133-369 (NGYIQNIING…TIALLRFRKT (237 aa)). A helical transmembrane segment spans residues 173–193 (PAWFGGVMAIINNITMLAIVL). Over 194–229 (TGSALIREREHGTVEHLLVMPITPFEIMMAKIWSMG) the chain is Cytoplasmic. The helical transmembrane segment at 230–250 (LVVLVVSGLSLVLMVKGVLGV) threads the bilayer. Over 251–255 (PIEGS) the chain is Periplasmic. The helical transmembrane segment at 256–276 (IPLFMLGVALSLFATTSIGIF) threads the bilayer. Residues 277 to 283 (MGTIARS) lie on the Cytoplasmic side of the membrane. A helical transmembrane segment spans residues 284–304 (MPQLGLLVILVLLPLQMLSGG). Over 305–342 (STPRESMPQMVQDIMLTMPTTHFVSLAQAILYRGAGFE) the chain is Periplasmic. The chain crosses the membrane as a helical span at residues 343 to 363 (IVWPQFLTLMAIGGAFFTIAL). Topologically, residues 364 to 374 (LRFRKTIGTMA) are cytoplasmic.

The protein belongs to the ABC-2 integral membrane protein family.

It localises to the cell inner membrane. In Escherichia coli (strain K12), this protein is Inner membrane transport permease YhhJ (yhhJ).